The sequence spans 508 residues: RanBP-type and C3HC4-type zinc finger-containing protein 1 (508 aa).

Methionine 1 is modified (N-acetylmethionine). The segment at methionine 1–arginine 218 is interaction with IRF3. The interval methionine 1 to glutamine 268 is interaction with TAB2. The residue at position 50 (serine 50) is a Phosphoserine. The 65-residue stretch at isoleucine 55–isoleucine 119 folds into the Ubiquitin-like domain. An interaction with RNF31 region spans residues valine 69–leucine 131. A disordered region spans residues glutamine 163 to proline 191. Residues proline 188–glutamate 220 form a RanBP2-type zinc finger. The stretch at aspartate 231–asparagine 259 forms a coiled coil. Positions glutamate 276–cysteine 504 are TRIAD supradomain. Zn(2+) is bound by residues cysteine 280, cysteine 283, cysteine 298, histidine 300, cysteine 303, cysteine 306, and cysteine 321. Residues cysteine 280 to cysteine 330 form an RING-type 1 zinc finger. Tyrosine 328 carries the post-translational modification Phosphotyrosine. Zn(2+)-binding residues include cysteine 330, cysteine 369, cysteine 374, cysteine 389, cysteine 392, cysteine 397, cysteine 400, histidine 404, cysteine 409, cysteine 445, and cysteine 448. An IBR-type zinc finger spans residues glutamine 349–cysteine 409. Residues cysteine 445–threonine 474 form an RING-type 2; atypical zinc finger. The active site involves cysteine 458. 2 residues coordinate Zn(2+): cysteine 463 and cysteine 466.

It belongs to the RBR family. In terms of assembly, component of the LUBAC complex (linear ubiquitin chain assembly complex) which consists of SHARPIN, RBCK1 and RNF31. LUBAC has a MW of approximately 600 kDa suggesting a heteromultimeric assembly of its subunits. Interacts with beta-I-type (PRKCB1) and zeta-type protein kinase C (PRKCZ). Interacts with UBE2L3. Interacts with IREB2 only in iron-rich conditions. Associates with the TNF-R1 signaling complex (TNF-RSC) in a stimulation-dependent manner. Interacts with EYA1, TAB2, TAB3, MAP3K7 TRAF6 and RIPK1. Interacts with IRF3. Post-translationally, auto-ubiquitinated. Auto-ubiquitination leads to degradation by the proteasome. In terms of processing, phosphorylated. In vitro, phosphorylation inhibits auto-ubiquitination activity.

It catalyses the reaction [E2 ubiquitin-conjugating enzyme]-S-ubiquitinyl-L-cysteine + [acceptor protein]-L-lysine = [E2 ubiquitin-conjugating enzyme]-L-cysteine + [acceptor protein]-N(6)-ubiquitinyl-L-lysine.. It participates in protein modification; protein ubiquitination. E3 ubiquitin-protein ligase, which accepts ubiquitin from specific E2 ubiquitin-conjugating enzymes, such as UBE2L3/UBCM4, and then transfers it to substrates. Functions as an E3 ligase for oxidized IREB2 and both heme and oxygen are necessary for IREB2 ubiquitination. Promotes ubiquitination of TAB2 and IRF3 and their degradation by the proteasome. Component of the LUBAC complex which conjugates linear ('Met-1'-linked) polyubiquitin chains to substrates and plays a key role in NF-kappa-B activation and regulation of inflammation. LUBAC conjugates linear polyubiquitin to IKBKG and RIPK1 and is involved in activation of the canonical NF-kappa-B and the JNK signaling pathways. Linear ubiquitination mediated by the LUBAC complex interferes with TNF-induced cell death and thereby prevents inflammation. LUBAC is recruited to the TNF-R1 signaling complex (TNF-RSC) following polyubiquitination of TNF-RSC components by BIRC2 and/or BIRC3 and to conjugate linear polyubiquitin to IKBKG and possibly other components contributing to the stability of the complex. The LUBAC complex is also involved in innate immunity by conjugating linear polyubiquitin chains at the surface of bacteria invading the cytosol to form the ubiquitin coat surrounding bacteria. LUBAC is not able to initiate formation of the bacterial ubiquitin coat, and can only promote formation of linear polyubiquitins on pre-existing ubiquitin. The bacterial ubiquitin coat acts as an 'eat-me' signal for xenophagy and promotes NF-kappa-B activation. Together with OTULIN, the LUBAC complex regulates the canonical Wnt signaling during angiogenesis. Binds polyubiquitin of different linkage types. The protein is RanBP-type and C3HC4-type zinc finger-containing protein 1 (Rbck1) of Mus musculus (Mouse).